A 1047-amino-acid polypeptide reads, in one-letter code: MVDLQEKQCTIVKRNGMFVPFDRNRIFQALEAAFRDTRRIDDHMPLPEDLESSIRSITHQVVKEVVQKITDGQVVTVERIQDMVESQLYVNGLQDVARDYIVYRDDRKAHRKKSWQSLSVVRRCGTVVHFNPMKISAALEKAFRATDKTEGMTPSSVREEINALTQNIVAEIEECCPQQDRRIDIEKIQDIVEQQLMVVGHYAVAKNYILYREARARVRDNREEDGSTEKTIAEEAVEVLSKDGSTYTMTHSQLLAHLARACSRFPETTDAALLTDMAFANFYSGIKESEVVLACIMAARANIEKEPDYAFVAAELLLDVVYKEALGKSKYAEDLEQAHRDHFKRYIAEGDTYRLNAELKHLFDLDALADAMDLSRDLQFSYMGIQNLYDRYFNHHEGCRLETPQIFWMRVAMGLALNEQDKTSWAITFYNLLSTFRYTPATPTLFNSGMRHSQLSSCYLSTVQDNLVNIYKVIADNAMLSKWAGGIGNDWTAIRATGALIKGTNGRSQGVIPFIKVTNDTAVAVNQGGKRKGAVCVYLEVWHLDYEDFLELRKNTGDERRRAHDVNIASWIPDLFFKRLQQKGTWTLFSPDDVPGLHDAYGEEFERLYEEYERKVDTGEIRLFKKVEAEDLWRKMLSMLFETGHPWMTFKDPSNIRSAQDHKGVVRCSNLCTEILLNCSETETAVCNLGSINLVQHIVGDGLDEEKLSETISIAVRMLDNVIDINFYPTKEAKEANFAHRAIGLGVMGFQDALYKLDISYASQEAVEFADYSSELISYYAIQASCLLAKERGTYSSYKGSKWDRGLLPIDTIQLLANYRGEANLQMDTSSRKDWEPIRSLVKEHGMRHCQLMAIAPTATISNIIGVTQSIEPTYKHLFVKSNLSGEFTIPNVYLIEKLKKLGIWDADMLDDLKYFDGSLLEIERIPDHLKHIFLTAFEIEPEWIIECASRRQKWIDMGQSLNLYLAQPDGKKLSNMYLTAWKKGLKTTYYLRSSSATTVEKSFVDINKRGIQPRWMKNKSASAGIIVERAKKAPVCSLEEGCEACQ.

ATP-cone domains lie at 9–111 (CTIV…KAHR), 118–219 (LSVV…ARVR), and 237–327 (VEVL…EALG). Residues T442, 457 to 458 (SC), G486, 670 to 674 (NLCTE), and 857 to 861 (PTATI) contribute to the substrate site. C458 and C687 form a disulfide bridge. Residue N670 is the Proton acceptor of the active site. Catalysis depends on C672, which acts as the Cysteine radical intermediate. E674 serves as the catalytic Proton acceptor.

Belongs to the ribonucleoside diphosphate reductase large chain family. As to quaternary structure, tetramer of two alpha and two beta subunits.

It carries out the reaction a 2'-deoxyribonucleoside 5'-diphosphate + [thioredoxin]-disulfide + H2O = a ribonucleoside 5'-diphosphate + [thioredoxin]-dithiol. Its activity is regulated as follows. Under complex allosteric control mediated by deoxynucleoside triphosphates and ATP binding. The type of nucleotide bound at the specificity site determines substrate preference. It seems probable that ATP makes the enzyme reduce CDP and UDP, dGTP favors ADP reduction and dTTP favors GDP reduction. In terms of biological role, provides the precursors necessary for DNA synthesis. Catalyzes the biosynthesis of deoxyribonucleotides from the corresponding ribonucleotides. This chain is Ribonucleoside-diphosphate reductase subunit alpha (nrdA), found in Chlamydia trachomatis serovar D (strain ATCC VR-885 / DSM 19411 / UW-3/Cx).